The following is a 316-amino-acid chain: N-acetyl-gamma-glutamyl-phosphate reductase (316 aa).

Residue Cys136 is part of the active site.

The protein belongs to the NAGSA dehydrogenase family. Type 1 subfamily.

It is found in the cytoplasm. It carries out the reaction N-acetyl-L-glutamate 5-semialdehyde + phosphate + NADP(+) = N-acetyl-L-glutamyl 5-phosphate + NADPH + H(+). It participates in amino-acid biosynthesis; L-arginine biosynthesis; N(2)-acetyl-L-ornithine from L-glutamate: step 3/4. Catalyzes the NADPH-dependent reduction of N-acetyl-5-glutamyl phosphate to yield N-acetyl-L-glutamate 5-semialdehyde. The polypeptide is N-acetyl-gamma-glutamyl-phosphate reductase (Xanthomonas campestris pv. campestris (strain ATCC 33913 / DSM 3586 / NCPPB 528 / LMG 568 / P 25)).